We begin with the raw amino-acid sequence, 176 residues long: NAD(P)H-quinone oxidoreductase subunit 6, chloroplastic (176 aa).

A run of 5 helical transmembrane segments spans residues 10-30 (FLLV…VLFT), 33-53 (IFSA…YILA), 63-83 (LLIY…FMSG), 105-125 (ISLF…GIIW), and 152-172 (FFLP…GAIA).

It belongs to the complex I subunit 6 family. As to quaternary structure, NDH is composed of at least 16 different subunits, 5 of which are encoded in the nucleus.

It is found in the plastid. The protein resides in the chloroplast thylakoid membrane. It carries out the reaction a plastoquinone + NADH + (n+1) H(+)(in) = a plastoquinol + NAD(+) + n H(+)(out). The enzyme catalyses a plastoquinone + NADPH + (n+1) H(+)(in) = a plastoquinol + NADP(+) + n H(+)(out). Its function is as follows. NDH shuttles electrons from NAD(P)H:plastoquinone, via FMN and iron-sulfur (Fe-S) centers, to quinones in the photosynthetic chain and possibly in a chloroplast respiratory chain. The immediate electron acceptor for the enzyme in this species is believed to be plastoquinone. Couples the redox reaction to proton translocation, and thus conserves the redox energy in a proton gradient. This is NAD(P)H-quinone oxidoreductase subunit 6, chloroplastic (ndhG) from Spinacia oleracea (Spinach).